Reading from the N-terminus, the 229-residue chain is Potassium/proton antiporter CemA (229 aa).

A run of 3 helical transmembrane segments spans residues 6-26, 107-127, and 189-209; these read AFIP…ISLC, ILHF…SFWG, and ILSG…KYWI.

This sequence belongs to the CemA family.

The protein resides in the plastid. The protein localises to the chloroplast inner membrane. The catalysed reaction is K(+)(in) + H(+)(out) = K(+)(out) + H(+)(in). Its function is as follows. Contributes to K(+)/H(+) antiport activity by supporting proton efflux to control proton extrusion and homeostasis in chloroplasts in a light-dependent manner to modulate photosynthesis. Prevents excessive induction of non-photochemical quenching (NPQ) under continuous-light conditions. Indirectly promotes efficient inorganic carbon uptake into chloroplasts. In Lepidium virginicum (Virginia pepperweed), this protein is Potassium/proton antiporter CemA.